A 231-amino-acid polypeptide reads, in one-letter code: RNA pyrophosphohydrolase (231 aa).

The region spanning 6 to 149 (GFRPNVGIIL…KRDVYQLALT (144 aa)) is the Nudix hydrolase domain. The Nudix box motif lies at 38–59 (GGIKYGETPVQAMYRELHEETG). Residues 157–190 (RPQPRTERPGGHHHGQRYPRMASSVNAPPGASMA) form a disordered region.

This sequence belongs to the Nudix hydrolase family. RppH subfamily. Requires a divalent metal cation as cofactor.

Its function is as follows. Accelerates the degradation of transcripts by removing pyrophosphate from the 5'-end of triphosphorylated RNA, leading to a more labile monophosphorylated state that can stimulate subsequent ribonuclease cleavage. The sequence is that of RNA pyrophosphohydrolase from Paraburkholderia phymatum (strain DSM 17167 / CIP 108236 / LMG 21445 / STM815) (Burkholderia phymatum).